The chain runs to 400 residues: Large envelope protein (400 aa).

Met1 is modified (N-acetylmethionine). A lipid anchor (N-myristoyl glycine; by host) is attached at Gly2. Residues 2–119 are pre-S1; the sequence is GAPLSTTRRG…PPLRDTHPQA (118 aa). Positions 2-174 are pre-S; it reads GAPLSTTRRG…FSKTGGPAMN (173 aa). The Virion surface; in external conformation segment spans residues 2-181; sequence GAPLSTTRRG…AMNMDNITSG (180 aa). Over 2–253 the chain is Intravirion; in internal conformation; it reads GAPLSTTRRG…PGYRWMCLRR (252 aa). N-linked (GlcNAc...) asparagine glycosylation is present at Pro4. The tract at residues 84-117 is disordered; that stretch reads VLTTLPADPPPASTNRRSGRKPTPVSPPLRDTHP. The tract at residues 120-174 is pre-S2; sequence MQWNSTQFHQALLDPRVRALYFPAGGSSSGTQNPAPTIASLTSSIFSKTGGPAMN. Residues 182 to 202 traverse the membrane as a helical segment; the sequence is LLGPLLVLQAVCFLLTKILTI. The Intravirion; in external conformation portion of the chain corresponds to 203–253; it reads PQSLDSWWTSLNFLGGLPGCPGQNSQSPTSNHLPTSCPPTCPGYRWMCLRR. The helical transmembrane segment at 254-274 threads the bilayer; sequence FIIFLFILLLCLIFLLVLLDY. Residues 275-348 are Virion surface-facing; it reads QGMLPVCPLL…WASARFSWLS (74 aa). N-linked (GlcNAc...) asparagine; by host glycosylation occurs at Asn320. Residues 349-369 traverse the membrane as a helical segment; that stretch reads LLVQFVQWCVGLSPTVWLLVI. Residues 370–375 are Intravirion-facing; that stretch reads WMIWYW. Residues 376–398 form a helical membrane-spanning segment; it reads GPNLCSILSPFIPLLPIFCYLWV. Topologically, residues 399-400 are virion surface; sequence SI.

It belongs to the orthohepadnavirus major surface antigen family. In terms of assembly, in its internal form (Li-HBsAg), interacts with the capsid protein and with the isoform S. Interacts with host chaperone CANX. As to quaternary structure, associates with host chaperone CANX through its pre-S2 N glycan; this association may be essential for isoform M proper secretion. Interacts with isoform L. Interacts with the antigens of satellite virus HDV (HDVAgs); this interaction is required for encapsidation of HDV genomic RNA. Isoform M is N-terminally acetylated by host at a ratio of 90%, and N-glycosylated by host at the pre-S2 region. Post-translationally, myristoylated.

It localises to the virion membrane. Functionally, the large envelope protein exists in two topological conformations, one which is termed 'external' or Le-HBsAg and the other 'internal' or Li-HBsAg. In its external conformation the protein attaches the virus to cell receptors and thereby initiating infection. This interaction determines the species specificity and liver tropism. This attachment induces virion internalization predominantly through caveolin-mediated endocytosis. The large envelope protein also assures fusion between virion membrane and endosomal membrane. In its internal conformation the protein plays a role in virion morphogenesis and mediates the contact with the nucleocapsid like a matrix protein. Its function is as follows. The middle envelope protein plays an important role in the budding of the virion. It is involved in the induction of budding in a nucleocapsid independent way. In this process the majority of envelope proteins bud to form subviral lipoprotein particles of 22 nm of diameter that do not contain a nucleocapsid. The chain is Large envelope protein from Hepatitis B virus genotype F2 (isolate Brazil/w4B) (HBV-F).